The sequence spans 105 residues: Met repressor (105 aa).

This sequence belongs to the MetJ family. As to quaternary structure, homodimer.

Its subcellular location is the cytoplasm. Its function is as follows. This regulatory protein, when combined with SAM (S-adenosylmethionine) represses the expression of the methionine regulon and of enzymes involved in SAM synthesis. The polypeptide is Met repressor (Actinobacillus succinogenes (strain ATCC 55618 / DSM 22257 / CCUG 43843 / 130Z)).